A 729-amino-acid chain; its full sequence is Catalase-peroxidase (729 aa).

The tract at residues 1 to 33 (MSAHNTNESAVGKCPFHEQKEEKSVLARGAGGG) is disordered. Residues 15-25 (PFHEQKEEKSV) are compositionally biased toward basic and acidic residues. Residues 108–229 (WHSAGTYRTV…LGATEMGLIY (122 aa)) constitute a cross-link (tryptophyl-tyrosyl-methioninium (Trp-Tyr) (with M-255)). Histidine 109 acts as the Proton acceptor in catalysis. The tryptophyl-tyrosyl-methioninium (Tyr-Met) (with W-108) cross-link spans 229–255 (YVNPEGPEASGNPASAAPAIRATFGNM). Histidine 270 contributes to the heme b binding site.

This sequence belongs to the peroxidase family. Peroxidase/catalase subfamily. Homodimer or homotetramer. The cofactor is heme b. In terms of processing, formation of the three residue Trp-Tyr-Met cross-link is important for the catalase, but not the peroxidase activity of the enzyme.

It catalyses the reaction H2O2 + AH2 = A + 2 H2O. The enzyme catalyses 2 H2O2 = O2 + 2 H2O. Bifunctional enzyme with both catalase and broad-spectrum peroxidase activity. In Erwinia tasmaniensis (strain DSM 17950 / CFBP 7177 / CIP 109463 / NCPPB 4357 / Et1/99), this protein is Catalase-peroxidase.